The sequence spans 376 residues: N-acetyldiaminopimelate deacetylase (376 aa).

Residue Asp-69 is part of the active site. Glu-128 acts as the Proton acceptor in catalysis.

It belongs to the peptidase M20A family. N-acetyldiaminopimelate deacetylase subfamily.

It carries out the reaction N-acetyl-(2S,6S)-2,6-diaminopimelate + H2O = (2S,6S)-2,6-diaminopimelate + acetate. It participates in amino-acid biosynthesis; L-lysine biosynthesis via DAP pathway; LL-2,6-diaminopimelate from (S)-tetrahydrodipicolinate (acetylase route): step 3/3. In terms of biological role, catalyzes the conversion of N-acetyl-diaminopimelate to diaminopimelate and acetate. In Streptococcus pneumoniae (strain Taiwan19F-14), this protein is N-acetyldiaminopimelate deacetylase.